The following is a 204-amino-acid chain: Capsid protein (204 aa).

Residues Glu-183–Lys-194 are compositionally biased toward polar residues. Positions Glu-183–Arg-204 are disordered.

It belongs to the closteroviridae capsid protein family.

It localises to the virion. Its function is as follows. Component that constitutes the body part of the virion. Also acts as a movement protein that is involved in local cell-cell movement via plamodesmata. At least five viral proteins, CP, CPm, p6, p64 and Hsp70h are essential for cell-cell movement. The sequence is that of Capsid protein from Beet yellows virus (isolate Ukraine) (BYV).